The following is a 417-amino-acid chain: Interferon regulatory factor 3 (417 aa).

Thr3 is subject to Phosphothreonine. The segment at residues 5 to 111 (KPRILPWLIS…DPHKIYEFVN (107 aa)) is a DNA-binding region (IRF tryptophan pentad repeat). Ser14 bears the Phosphoserine mark. Thr75 bears the Phosphothreonine mark. 2 positions are modified to phosphoserine: Ser97 and Ser123. Disordered regions lie at residues 111-134 (NSGV…TSDT) and 147-170 (DLSP…LQSP). The segment at 140–417 (EKLLSDMDLS…LQDLAEDMDF (278 aa)) is mediates interaction with ZDHHC11. Phosphoserine is present on Ser184. Residue Lys189 forms a Glycyl lysine isopeptide (Lys-Gly) (interchain with G-Cter in ISG15) linkage. An interaction with HERC5 region spans residues 196–356 (EDWEFEVTAF…SWPQDQPWIK (161 aa)). Position 249 is a phosphothreonine (Thr249). Cys263 and Cys285 are joined by a disulfide. Residues Lys356 and Lys362 each participate in a glycyl lysine isopeptide (Lys-Gly) (interchain with G-Cter in ISG15) cross-link. Lys362 bears the N6-acetyllysine mark. Ser381 bears the Phosphoserine mark. Diphosphoserine is present on Ser382. Position 382 is a phosphoserine; by TBK1 (Ser382). Ser392 carries the post-translational modification Phosphoserine; by IKKE. Ser394 carries the phosphoserine modification. The residue at position 400 (Thr400) is a Phosphothreonine.

The protein belongs to the IRF family. Monomer. Homodimer; phosphorylation-induced. Interacts (when phosphorylated) with CREBBP. Interacts with MAVS (via phosphorylated pLxIS motif). Interacts with TICAM1 (via phosphorylated pLxIS motif). Interacts with STING1 (via phosphorylated pLxIS motif). Interacts with IKBKE and TBK1. Interacts with TICAM2. Interacts with RBCK1. Interacts with HERC5. Interacts with DDX3X; the interaction allows the phosphorylation and activation of IRF3 by IKBKE. Interacts with TRIM21 and ULK1, in the presence of TRIM21; this interaction leads to IRF3 degradation by autophagy. Interacts with RIOK3; RIOK3 probably mediates the interaction of TBK1 with IRF3. Interacts with ILRUN; the interaction inhibits IRF3 binding to its DNA consensus sequence. Interacts with LYAR; this interaction impairs IRF3 DNA-binding activity. Interacts with TRAF3. Interacts with ZDHHC11; ZDHHC11 recruits IRF3 to STING1 upon DNA virus infection and thereby promotes IRF3 activation. Interacts with HSP90AA1; the interaction mediates IRF3 association with TOMM70. Interacts with BCL2; the interaction decreases upon Sendai virus infection. Interacts with BAX; the interaction is direct, increases upon virus infection and mediates the formation of the apoptosis complex TOMM70:HSP90AA1:IRF3:BAX. Interacts with DDX56. Interacts with NBR1. In terms of processing, constitutively phosphorylated on many Ser/Thr residues. Activated following phosphorylation by TBK1 and IKBKE. Innate adapter proteins, such as MAVS, STING1 or TICAM1, are first activated by viral RNA, cytosolic DNA, and bacterial lipopolysaccharide (LPS), respectively, leading to activation of the kinases TBK1 and IKBKE. These kinases then phosphorylate the adapter proteins on the pLxIS motif, leading to recruitment of IRF3, thereby licensing IRF3 for phosphorylation by TBK1. Phosphorylation at Ser-382 is followed by pyrophosphorylation at the same residue, promoting phosphorylation at Ser-392. Phosphorylated IRF3 dissociates from the adapter proteins, dimerizes, and then enters the nucleus to induce IFNs. Pyrophosphorylated by UAP1 following phosphorylation at Ser-382 by TBK1. Pyrophosphorylation promotes subsequent phosphorylation at Ser-392, leading to homodimerization of IRF3. Post-translationally, acetylation at Lys-362 by KAT8 inhibits recruimtent to promoters and transcription factor activity. Acetylation by KAT8 is promoted by phosphorylation at Ser-392. In terms of processing, ubiquitinated; ubiquitination involves RBCK1 leading to proteasomal degradation. Polyubiquitinated; ubiquitination involves TRIM21 leading to proteasomal degradation. Ubiquitinated by UBE3C, leading to its degradation. Deubiquitinated by USP5 on both 'Lys-48'-linked unanchored and 'Lys-63'-linked anchored polyubiquitin, leading to inhibition of anti-RNA viral innate immunity. ISGylated by HERC5 resulting in sustained IRF3 activation and in the inhibition of IRF3 ubiquitination by disrupting PIN1 binding. The phosphorylation state of IRF3 does not alter ISGylation. Post-translationally, proteolytically cleaved by apoptotic caspases during apoptosis, leading to its inactivation. Cleavage by CASP3 during virus-induced apoptosis inactivates it, preventing cytokine overproduction.

The protein localises to the cytoplasm. The protein resides in the nucleus. It is found in the mitochondrion. In the absence of viral infection, maintained as a monomer in an autoinhibited state. Phosphorylation by TBK1 and IKBKE disrupts this autoinhibition leading to the liberation of the DNA-binding and dimerization activities and its nuclear localization where it can activate type I IFN and ISG genes. Phosphorylation and activation follow the following steps: innate adapter proteins, such as MAVS, STING1 or TICAM1, are first activated by viral RNA, cytosolic DNA and bacterial lipopolysaccharide (LPS), respectively, leading to activation of the kinases TBK1 and IKBKE. These kinases then phosphorylate the adapter proteins on their pLxIS motif, leading to recruitment of IRF3, thereby licensing IRF3 for phosphorylation by TBK1. Phosphorylated IRF3 dissociates from the adapter proteins, dimerizes, and then enters the nucleus to induce IFNs. Key transcriptional regulator of type I interferon (IFN)-dependent immune responses which plays a critical role in the innate immune response against DNA and RNA viruses. Regulates the transcription of type I IFN genes (IFN-alpha and IFN-beta) and IFN-stimulated genes (ISG) by binding to an interferon-stimulated response element (ISRE) in their promoters. Acts as a more potent activator of the IFN-beta (IFNB) gene than the IFN-alpha (IFNA) gene and plays a critical role in both the early and late phases of the IFNA/B gene induction. Found in an inactive form in the cytoplasm of uninfected cells and following viral infection, double-stranded RNA (dsRNA), or toll-like receptor (TLR) signaling, is phosphorylated by IKBKE and TBK1 kinases. This induces a conformational change, leading to its dimerization and nuclear localization and association with CREB binding protein (CREBBP) to form dsRNA-activated factor 1 (DRAF1), a complex which activates the transcription of the type I IFN and ISG genes. Can activate distinct gene expression programs in macrophages and can induce significant apoptosis in primary macrophages. The protein is Interferon regulatory factor 3 (IRF3) of Bos taurus (Bovine).